Consider the following 328-residue polypeptide: Malate dehydrogenase (328 aa).

11–17 lines the NAD(+) pocket; it reads GAAGQIG. Substrate is bound by residues Arg-94 and Arg-100. NAD(+)-binding positions include Asn-107, Gln-114, and 131–133; that span reads VGN. Positions 133 and 164 each coordinate substrate. The Proton acceptor role is filled by His-189.

Belongs to the LDH/MDH superfamily. MDH type 2 family.

The enzyme catalyses (S)-malate + NAD(+) = oxaloacetate + NADH + H(+). Its function is as follows. Catalyzes the reversible oxidation of malate to oxaloacetate. The protein is Malate dehydrogenase of Stenotrophomonas maltophilia (strain R551-3).